Reading from the N-terminus, the 261-residue chain is Triosephosphate isomerase (261 aa).

10 to 12 (NWK) provides a ligand contact to substrate. His100 (electrophile) is an active-site residue. Glu172 (proton acceptor) is an active-site residue. Substrate-binding positions include Gly178, Ser218, and 239 to 240 (GG).

Belongs to the triosephosphate isomerase family. As to quaternary structure, homodimer.

It localises to the cytoplasm. It catalyses the reaction D-glyceraldehyde 3-phosphate = dihydroxyacetone phosphate. It participates in carbohydrate biosynthesis; gluconeogenesis. Its pathway is carbohydrate degradation; glycolysis; D-glyceraldehyde 3-phosphate from glycerone phosphate: step 1/1. In terms of biological role, involved in the gluconeogenesis. Catalyzes stereospecifically the conversion of dihydroxyacetone phosphate (DHAP) to D-glyceraldehyde-3-phosphate (G3P). This Mycobacterium leprae (strain TN) protein is Triosephosphate isomerase.